Consider the following 235-residue polypeptide: Putative N-acetylmannosamine-6-phosphate 2-epimerase (235 aa).

The protein belongs to the NanE family.

It carries out the reaction an N-acyl-D-glucosamine 6-phosphate = an N-acyl-D-mannosamine 6-phosphate. It functions in the pathway amino-sugar metabolism; N-acetylneuraminate degradation; D-fructose 6-phosphate from N-acetylneuraminate: step 3/5. Its function is as follows. Converts N-acetylmannosamine-6-phosphate (ManNAc-6-P) to N-acetylglucosamine-6-phosphate (GlcNAc-6-P). The chain is Putative N-acetylmannosamine-6-phosphate 2-epimerase from Edwardsiella ictaluri (strain 93-146).